The primary structure comprises 372 residues: 4-hydroxy-3-methylbut-2-en-1-yl diphosphate synthase (flavodoxin) (372 aa).

The [4Fe-4S] cluster site is built by C270, C273, C305, and E312.

Belongs to the IspG family. Requires [4Fe-4S] cluster as cofactor.

It catalyses the reaction (2E)-4-hydroxy-3-methylbut-2-enyl diphosphate + oxidized [flavodoxin] + H2O + 2 H(+) = 2-C-methyl-D-erythritol 2,4-cyclic diphosphate + reduced [flavodoxin]. It functions in the pathway isoprenoid biosynthesis; isopentenyl diphosphate biosynthesis via DXP pathway; isopentenyl diphosphate from 1-deoxy-D-xylulose 5-phosphate: step 5/6. Its function is as follows. Converts 2C-methyl-D-erythritol 2,4-cyclodiphosphate (ME-2,4cPP) into 1-hydroxy-2-methyl-2-(E)-butenyl 4-diphosphate. The protein is 4-hydroxy-3-methylbut-2-en-1-yl diphosphate synthase (flavodoxin) of Shigella boydii serotype 18 (strain CDC 3083-94 / BS512).